We begin with the raw amino-acid sequence, 201 residues long: Dephospho-CoA kinase (201 aa).

The DPCK domain occupies 4–201 (SVGLTGNIAS…KYLREAKIKQ (198 aa)). An ATP-binding site is contributed by 12–17 (ASGKST).

The protein belongs to the CoaE family.

It localises to the cytoplasm. The enzyme catalyses 3'-dephospho-CoA + ATP = ADP + CoA + H(+). It functions in the pathway cofactor biosynthesis; coenzyme A biosynthesis; CoA from (R)-pantothenate: step 5/5. Functionally, catalyzes the phosphorylation of the 3'-hydroxyl group of dephosphocoenzyme A to form coenzyme A. The chain is Dephospho-CoA kinase from Legionella pneumophila (strain Paris).